A 566-amino-acid chain; its full sequence is 5'-AMP-activated protein kinase subunit gamma-2 (566 aa).

Residues Met-1 to Pro-198 are disordered. A compositionally biased stretch (low complexity) spans Ser-15–Asn-25. The segment covering Asn-54–Asp-64 has biased composition (basic and acidic residues). Phosphoserine occurs at positions 65, 71, 73, 90, 138, 143, 158, 161, and 162. 2 stretches are compositionally biased toward low complexity: residues Lys-132–Pro-144 and Thr-156–Gln-172. Thr-165 carries the post-translational modification Phosphothreonine. Residues Tyr-180–Ser-189 are compositionally biased toward basic and acidic residues. Position 196 is a phosphoserine (Ser-196). CBS domains follow at residues Pro-272 to Met-332, Thr-354 to Met-412, and Ile-427 to Ile-489. ADP contacts are provided by residues Arg-299, Met-314–Asp-319, Val-359, His-380–Arg-381, and Lys-399. AMP is bound by residues Arg-299, Met-314–Asp-319, Val-359, His-380, His-380–Arg-381, Lys-399, Thr-429, Ala-434, Ser-455–Ala-456, Ser-471–Asp-474, Arg-498, His-527, His-527–Arg-528, and Ser-543–Asp-546. ATP is bound by residues Arg-299, Met-314–Asp-319, Val-359, His-380–Arg-381, Arg-381, and Lys-399. Residues Leu-367 to Ile-388 carry the AMPK pseudosubstrate motif. Residues Ser-471–Asp-474, Arg-498, and His-527–Arg-528 contribute to the ADP site. ATP is bound by residues Ser-471 to Asp-474, Arg-498, and His-527 to Arg-528. The region spanning Tyr-501–Lys-559 is the CBS 4 domain.

This sequence belongs to the 5'-AMP-activated protein kinase gamma subunit family. As to quaternary structure, AMPK is a heterotrimer of an alpha catalytic subunit (PRKAA1 or PRKAA2), a beta (PRKAB1 or PRKAB2) and a gamma non-catalytic subunits (PRKAG1, PRKAG2 or PRKAG3). Interacts with FNIP1 and FNIP2. Phosphorylated by ULK1; leading to negatively regulate AMPK activity and suggesting the existence of a regulatory feedback loop between ULK1 and AMPK. In terms of processing, glycosylated; O-GlcNAcylated by OGT, promoting the AMP-activated protein kinase (AMPK) activity.

Its function is as follows. AMP/ATP-binding subunit of AMP-activated protein kinase (AMPK), an energy sensor protein kinase that plays a key role in regulating cellular energy metabolism. In response to reduction of intracellular ATP levels, AMPK activates energy-producing pathways and inhibits energy-consuming processes: inhibits protein, carbohydrate and lipid biosynthesis, as well as cell growth and proliferation. AMPK acts via direct phosphorylation of metabolic enzymes, and by longer-term effects via phosphorylation of transcription regulators. Also acts as a regulator of cellular polarity by remodeling the actin cytoskeleton; probably by indirectly activating myosin. Gamma non-catalytic subunit mediates binding to AMP, ADP and ATP, leading to activate or inhibit AMPK: AMP-binding results in allosteric activation of alpha catalytic subunit (PRKAA1 or PRKAA2) both by inducing phosphorylation and preventing dephosphorylation of catalytic subunits. ADP also stimulates phosphorylation, without stimulating already phosphorylated catalytic subunit. ATP promotes dephosphorylation of catalytic subunit, rendering the AMPK enzyme inactive. This chain is 5'-AMP-activated protein kinase subunit gamma-2 (Prkag2), found in Mus musculus (Mouse).